A 160-amino-acid polypeptide reads, in one-letter code: uncharacterized protein (160 aa).

The RING-type zinc finger occupies 8 to 46 (CAVCLDFFVEPCIIECGHSYCRFCIESHLNINEKCPLCR).

This is an uncharacterized protein from Caenorhabditis elegans.